The primary structure comprises 451 residues: MSQRSTKMGDTIAAIATASGAAGIGIIRISGSQIKTIATGLGMTTLRPRYAHYTRFLDVDDQVIDDGLAIWFPAPHSFTGEDVLELQGHGSPLLLRQLLTRCLDLGARQARPGEFSERAFLNGKLDLIQAEAIADMIGAADLRAARAARRSLDGVFSRRCEALAQQLVRLRIHVEATIDFADESLDTLDRAQIRTSLQTLNVELTQLLRDAEHGKRLCDGLYTVLVGPPNVGKSSLLNALIGSDRAIVTDVPGTTRDTLRESVHFHGLEFVLVDTAGLRGEGDAIEREGMRRTLNELQRADLALVVLDACDPQIGSLALADALTSVPRVLWIHNKLDLLTEPPSVLDTDVIPVSAMTGAGLDTLKTRLRTLLLGETVETIEGEFSARLRHVQALQRTAAHVTDANAQFSYEHLELTAEELRLAYKALGEINGSMSPDELLGRIFSNFCIGK.

Residues Arg-28, Glu-85, and Lys-124 each coordinate (6S)-5-formyl-5,6,7,8-tetrahydrofolate. The region spanning 220-373 is the TrmE-type G domain; that stretch reads GLYTVLVGPP…LKTRLRTLLL (154 aa). Position 230 (Asn-230) interacts with K(+). Residues 230-235, 249-255, and 274-277 contribute to the GTP site; these read NVGKSS, TDVPGTT, and DTAG. Ser-234 is a binding site for Mg(2+). Residues Thr-249, Val-251, and Thr-254 each coordinate K(+). Thr-255 provides a ligand contact to Mg(2+). Lys-451 contacts (6S)-5-formyl-5,6,7,8-tetrahydrofolate.

This sequence belongs to the TRAFAC class TrmE-Era-EngA-EngB-Septin-like GTPase superfamily. TrmE GTPase family. Homodimer. Heterotetramer of two MnmE and two MnmG subunits. K(+) is required as a cofactor.

The protein localises to the cytoplasm. Functionally, exhibits a very high intrinsic GTPase hydrolysis rate. Involved in the addition of a carboxymethylaminomethyl (cmnm) group at the wobble position (U34) of certain tRNAs, forming tRNA-cmnm(5)s(2)U34. In Xylella fastidiosa (strain Temecula1 / ATCC 700964), this protein is tRNA modification GTPase MnmE.